The following is a 591-amino-acid chain: DEAD-box ATP-dependent RNA helicase 17 (591 aa).

The Q motif signature appears at 23–52 (CSFTDLGLHPTLCAHLQDKMGFQAPTRIQA). The Helicase ATP-binding domain maps to 55-248 (IPVAMSGQHM…KISLKNPVMI (194 aa)). Residue 68 to 75 (AATGTGKT) participates in ATP binding. The short motif at 181-184 (DEAD) is the DEAD box element. Positions 293–482 (QLVQRYVKVS…SFPVNGQRLH (190 aa)) constitute a Helicase C-terminal domain. A disordered region spans residues 562 to 591 (GRSHQVQLKKRKKEQKRERPAKRRKIPAKR). Basic residues predominate over residues 568-591 (QLKKRKKEQKRERPAKRRKIPAKR).

The protein belongs to the DEAD box helicase family. DDX31/DBP7 subfamily. In terms of tissue distribution, expressed in flowers and pollen grains.

The protein localises to the nucleus. It catalyses the reaction ATP + H2O = ADP + phosphate + H(+). In terms of biological role, may play a role in organellar ribosome biogenesis and suppress 16S rRNA maturation. The chain is DEAD-box ATP-dependent RNA helicase 17 from Oryza sativa subsp. japonica (Rice).